Here is a 526-residue protein sequence, read N- to C-terminus: Bifunctional purine biosynthesis protein PurH (526 aa).

Positions 1–147 (MPSIKRALIS…KNWKHVAIVT (147 aa)) constitute an MGS-like domain.

Belongs to the PurH family.

It catalyses the reaction (6R)-10-formyltetrahydrofolate + 5-amino-1-(5-phospho-beta-D-ribosyl)imidazole-4-carboxamide = 5-formamido-1-(5-phospho-D-ribosyl)imidazole-4-carboxamide + (6S)-5,6,7,8-tetrahydrofolate. The catalysed reaction is IMP + H2O = 5-formamido-1-(5-phospho-D-ribosyl)imidazole-4-carboxamide. Its pathway is purine metabolism; IMP biosynthesis via de novo pathway; 5-formamido-1-(5-phospho-D-ribosyl)imidazole-4-carboxamide from 5-amino-1-(5-phospho-D-ribosyl)imidazole-4-carboxamide (10-formyl THF route): step 1/1. The protein operates within purine metabolism; IMP biosynthesis via de novo pathway; IMP from 5-formamido-1-(5-phospho-D-ribosyl)imidazole-4-carboxamide: step 1/1. This chain is Bifunctional purine biosynthesis protein PurH, found in Neisseria meningitidis serogroup C / serotype 2a (strain ATCC 700532 / DSM 15464 / FAM18).